We begin with the raw amino-acid sequence, 108 residues long: Large ribosomal subunit protein uL11 (108 aa).

Belongs to the universal ribosomal protein uL11 family. Part of the ribosomal stalk of the 50S ribosomal subunit. Interacts with L10 and the large rRNA to form the base of the stalk. L10 forms an elongated spine to which L12 dimers bind in a sequential fashion forming a multimeric L10(L12)X complex.

Forms part of the ribosomal stalk which helps the ribosome interact with GTP-bound translation factors. The polypeptide is Large ribosomal subunit protein uL11 (rpl11) (Aeropyrum pernix (strain ATCC 700893 / DSM 11879 / JCM 9820 / NBRC 100138 / K1)).